The following is a 33-amino-acid chain: Mytimycin (33 aa).

The protein localises to the secreted. In terms of biological role, has antifungal activity against N.crassa and F.culmorum. The sequence is that of Mytimycin from Mytilus edulis (Blue mussel).